The primary structure comprises 348 residues: Tetraacyldisaccharide 4'-kinase (348 aa).

An ATP-binding site is contributed by 54 to 61 (TVGGAGKT).

Belongs to the LpxK family.

The enzyme catalyses a lipid A disaccharide + ATP = a lipid IVA + ADP + H(+). Its pathway is glycolipid biosynthesis; lipid IV(A) biosynthesis; lipid IV(A) from (3R)-3-hydroxytetradecanoyl-[acyl-carrier-protein] and UDP-N-acetyl-alpha-D-glucosamine: step 6/6. In terms of biological role, transfers the gamma-phosphate of ATP to the 4'-position of a tetraacyldisaccharide 1-phosphate intermediate (termed DS-1-P) to form tetraacyldisaccharide 1,4'-bis-phosphate (lipid IVA). The protein is Tetraacyldisaccharide 4'-kinase of Agrobacterium fabrum (strain C58 / ATCC 33970) (Agrobacterium tumefaciens (strain C58)).